Here is a 275-residue protein sequence, read N- to C-terminus: Putative ankyrin repeat protein L715 (275 aa).

ANK repeat units lie at residues 94–123 (NINY…DINY), 124–153 (NNGL…NTND), 155–183 (IFQL…SIDP), and 184–213 (IYST…SDST). Residues 253–275 (NQDESDVGDDAENDIENDIEDDN) form a disordered region. A compositionally biased stretch (acidic residues) spans 255-275 (DESDVGDDAENDIENDIEDDN).

The protein is Putative ankyrin repeat protein L715 of Acanthamoeba polyphaga mimivirus (APMV).